The chain runs to 261 residues: Shikimate dehydrogenase (NADP(+)) (261 aa).

Shikimate is bound by residues 13-15 (SLS) and T60. The Proton acceptor role is filled by K64. Positions 85 and 100 each coordinate shikimate. Residues 121 to 125 (GAGGA) and I202 contribute to the NADP(+) site. Y204 is a shikimate binding site. Residue G225 coordinates NADP(+).

It belongs to the shikimate dehydrogenase family. As to quaternary structure, homodimer.

It catalyses the reaction shikimate + NADP(+) = 3-dehydroshikimate + NADPH + H(+). It participates in metabolic intermediate biosynthesis; chorismate biosynthesis; chorismate from D-erythrose 4-phosphate and phosphoenolpyruvate: step 4/7. Functionally, involved in the biosynthesis of the chorismate, which leads to the biosynthesis of aromatic amino acids. Catalyzes the reversible NADPH linked reduction of 3-dehydroshikimate (DHSA) to yield shikimate (SA). The protein is Shikimate dehydrogenase (NADP(+)) of Exiguobacterium sibiricum (strain DSM 17290 / CCUG 55495 / CIP 109462 / JCM 13490 / 255-15).